The chain runs to 324 residues: Stomatin-like protein stl-1 (324 aa).

Belongs to the band 7/mec-2 family. In terms of tissue distribution, widely expressed in most tissues, including body wall muscles, intestinal epithelia, and pharynx and head neurons.

The protein localises to the mitochondrion. Its function is as follows. Mitochondrial protein that probably regulates the biogenesis and the activity of mitochondria. In neurons, involved in mitochondrial fusion and recovery of normal locomotory behavior during reoxygenation; probably acts independently of egl-9 and the canonical hypoxia response pathway. The polypeptide is Stomatin-like protein stl-1 (Caenorhabditis elegans).